The sequence spans 241 residues: Ion-translocating oxidoreductase complex subunit E (241 aa).

Helical transmembrane passes span 22 to 42 (LLGL…IGLG), 69 to 89 (IPIY…VIKA), 91 to 111 (AFNL…NCIV), 124 to 144 (VLVS…TMFL), 157 to 177 (LFFG…IEVL), and 182 to 202 (VFLL…VLAG).

It belongs to the NqrDE/RnfAE family. The complex is composed of six subunits: RnfA, RnfB, RnfC, RnfD, RnfE and RnfG.

The protein localises to the cell inner membrane. In terms of biological role, part of a membrane-bound complex that couples electron transfer with translocation of ions across the membrane. The polypeptide is Ion-translocating oxidoreductase complex subunit E (Buchnera aphidicola subsp. Baizongia pistaciae (strain Bp)).